Consider the following 255-residue polypeptide: Indole-3-glycerol phosphate synthase (255 aa).

Belongs to the TrpC family.

It carries out the reaction 1-(2-carboxyphenylamino)-1-deoxy-D-ribulose 5-phosphate + H(+) = (1S,2R)-1-C-(indol-3-yl)glycerol 3-phosphate + CO2 + H2O. It functions in the pathway amino-acid biosynthesis; L-tryptophan biosynthesis; L-tryptophan from chorismate: step 4/5. The polypeptide is Indole-3-glycerol phosphate synthase (Streptococcus mutans serotype c (strain ATCC 700610 / UA159)).